A 440-amino-acid chain; its full sequence is MAATTSKIDDSMPARISSDCPEEIREVLYYAWGHDRSGLKKLLKTTGKATAQDPKTGETPLHAAIRACGPASPDDDGQEEDGSVEEAKDIVHDLFLQGAIWNDVDSNNETPGCLALRLGRKSLYQLCIEAGVRAELLFALMGDYEELSSGSEDGDEEMEVQQDDDEEAPQLVSTEDVEPTVEEPKFIPPDAKEKQVTSEEYLNSKLVYDDAKLVDSDLNGVMMAWETDIMRRSVAALIPDSAPGKRILNIGFGMGIVDGMFAELKPSRHHIIEAHPSVLEHLSKDESKFGPSWEKSGPEEGAFKVHKGKWQDIVPKLLEDGEIYDAIYFDTFGEDYSQLRYFFSECIIGIMDQEGKFSFFNGLGADRKICYDVYTKVVEMQCADAGLDVEWEESDVDMSGLEKAGEGEWEGVRRRYWTLDSKSFEGAAVLRYAVGTSNRL.

Residues 147–194 (LSSGSEDGDEEMEVQQDDDEEAPQLVSTEDVEPTVEEPKFIPPDAKEK) form a disordered region. Over residues 152-168 (EDGDEEMEVQQDDDEEA) the composition is skewed to acidic residues. The segment covering 182-194 (EEPKFIPPDAKEK) has biased composition (basic and acidic residues). One can recognise an RMT2 domain in the interval 192–440 (KEKQVTSEEY…RYAVGTSNRL (249 aa)). Residues tyrosine 201, methionine 230, 252–257 (FGMGIV), 273–275 (EAH), 310–311 (WQ), and aspartate 330 each bind S-adenosyl-L-methionine.

The protein belongs to the class I-like SAM-binding methyltransferase superfamily. RMT2 methyltransferase family. As to quaternary structure, monomer.

Its subcellular location is the cytoplasm. The protein localises to the nucleus. Its function is as follows. S-adenosyl-L-methionine-dependent protein-arginine N-methyltransferase that methylates the delta-nitrogen atom of arginine residues to form N5-methylarginine (type IV) in target proteins. Monomethylates ribosomal protein L12. In Gibberella zeae (strain ATCC MYA-4620 / CBS 123657 / FGSC 9075 / NRRL 31084 / PH-1) (Wheat head blight fungus), this protein is Protein arginine N-methyltransferase 2.